The sequence spans 472 residues: Acyltransferase PapA3 (472 aa).

The protein belongs to the PapA acyltransferase family.

It carries out the reaction a long-chain fatty acyl-CoA + alpha,alpha-trehalose = a 2-O-(long-chain fatty acyl)-alpha,alpha-trehalose + CoA. The catalysed reaction is a mycolipenoyl-CoA + a 2-O-(long-chain fatty acyl)-alpha,alpha-trehalose = a 2-O-(long-chain fatty acyl)-3-O-mycolipenoyl-trehalose + CoA. It catalyses the reaction alpha,alpha-trehalose + hexadecanoyl-CoA = 2-O-hexadecanoyl-alpha,alpha-trehalose + CoA. The enzyme catalyses 2-O-hexadecanoyl-alpha,alpha-trehalose + hexadecanoyl-CoA = 2-O,3-O-dihexadecanoyl-alpha,alpha-trehalose + CoA. In terms of biological role, involved in the biosynthesis of polyacyltrehalose (PAT), a pentaacylated, trehalose-based glycolipid that could have a role in anchoring the bacterial capsule. Catalyzes the sequential transfer of two palmitoyl groups onto a single glucose residue of trehalose generating the diacylated product 2,3-diacyltrehalose (trehalose dipalmitate). This is Acyltransferase PapA3 (papA3) from Mycobacterium tuberculosis (strain CDC 1551 / Oshkosh).